Reading from the N-terminus, the 258-residue chain is Deoxyribose-phosphate aldolase (258 aa).

Residue Asp-102 is the Proton donor/acceptor of the active site. The Schiff-base intermediate with acetaldehyde role is filled by Lys-165. Residue Lys-199 is the Proton donor/acceptor of the active site.

The protein belongs to the DeoC/FbaB aldolase family. DeoC type 2 subfamily.

It is found in the cytoplasm. The catalysed reaction is 2-deoxy-D-ribose 5-phosphate = D-glyceraldehyde 3-phosphate + acetaldehyde. Its pathway is carbohydrate degradation; 2-deoxy-D-ribose 1-phosphate degradation; D-glyceraldehyde 3-phosphate and acetaldehyde from 2-deoxy-alpha-D-ribose 1-phosphate: step 2/2. Its function is as follows. Catalyzes a reversible aldol reaction between acetaldehyde and D-glyceraldehyde 3-phosphate to generate 2-deoxy-D-ribose 5-phosphate. This is Deoxyribose-phosphate aldolase from Vibrio parahaemolyticus serotype O3:K6 (strain RIMD 2210633).